The chain runs to 413 residues: Chloramphenicol resistance protein CraA (413 aa).

The next 12 helical transmembrane spans lie at 18–38, 55–75, 84–104, 110–130, 147–167, 170–190, 228–248, 260–280, 289–309, 312–332, 349–369, and 373–393; these read LMFPLALVLFEFAVYIGNDLI, WAPSSMSFYLLGGASVAWLLG, KKVLLSGVLFFALCCFLILLT, FLTLRFLQGIGLSVISAVGYA, LMANISLLAPLLGPVLGAFLI, VSWHWGFVAIALLALLSWVGL, ALPLVGMPLMLWIALSPIILV, LAQFPVFLGLIVGNIVLIKII, VLIGLPIMLTGTLILILGVVW, YLIPCLLIGMTLICFGEGISF, TVAAAVSMLLMTSFFAMIELV, and YTQFHLWAFVLSAFAFIALWF.

It belongs to the major facilitator superfamily.

It is found in the cell inner membrane. Its function is as follows. Efflux pump that mediates resistance to chloramphenicol. In Acinetobacter baumannii (strain ATCC 19606 / DSM 30007 / JCM 6841 / CCUG 19606 / CIP 70.34 / NBRC 109757 / NCIMB 12457 / NCTC 12156 / 81), this protein is Chloramphenicol resistance protein CraA.